A 305-amino-acid chain; its full sequence is MTHLPSFVDVHADVRNALETNAPVVALESTIITHGMPFPDNVEMAKAVEEEIRARGAIPATIAVLDGVLKIGLGADELEALAKVKDALKISRADIGYAISQGKSAGTTVAATMIVAQMAGIRVFATGGIGGVHKGVETSFDISADLTELGRTDVIVVAAGAKAILDVPKTLEVLETQGVSVVGYRTDTLPAFWTSGSDLDIPLRLDSAAEISEFQKVRDALRLGGGMLVANPIPAGDEIPAEIINGYIATAQAEMAAQSISGKAVTPFLLQRIFELSEGRSLRSNIALVKNNARLAADIAVALHS.

Residue Glu28 is the Proton donor of the active site. Residues Lys89 and Val109 each contribute to the substrate site. Asp141 lines the Mn(2+) pocket. 143–145 (SAD) is a binding site for substrate. Lys162 functions as the Nucleophile in the catalytic mechanism.

The protein belongs to the pseudouridine-5'-phosphate glycosidase family. Homotrimer. It depends on Mn(2+) as a cofactor.

It carries out the reaction D-ribose 5-phosphate + uracil = psi-UMP + H2O. Its function is as follows. Catalyzes the reversible cleavage of pseudouridine 5'-phosphate (PsiMP) to ribose 5-phosphate and uracil. Functions biologically in the cleavage direction, as part of a pseudouridine degradation pathway. This chain is Pseudouridine-5'-phosphate glycosidase, found in Dinoroseobacter shibae (strain DSM 16493 / NCIMB 14021 / DFL 12).